The sequence spans 78 residues: Small ribosomal subunit protein uS17 (78 aa).

Belongs to the universal ribosomal protein uS17 family. In terms of assembly, part of the 30S ribosomal subunit.

Its function is as follows. One of the primary rRNA binding proteins, it binds specifically to the 5'-end of 16S ribosomal RNA. This chain is Small ribosomal subunit protein uS17, found in Wolbachia pipientis wMel.